The following is a 105-amino-acid chain: Pyruvate synthase subunit PorD (105 aa).

4Fe-4S ferredoxin-type domains lie at 44 to 73 (FKPE…LDEE) and 74 to 103 (GYPV…MVRE). C53, C56, C59, C63, C83, C86, C89, and C93 together coordinate [4Fe-4S] cluster.

In terms of assembly, heterotetramer of one alpha, one beta, one delta and one gamma chain. It depends on [4Fe-4S] cluster as a cofactor.

This is Pyruvate synthase subunit PorD (porD) from Pyrococcus furiosus (strain ATCC 43587 / DSM 3638 / JCM 8422 / Vc1).